The following is an 80-amino-acid chain: UPF0248 protein YG5714_2801 (80 aa).

Belongs to the UPF0248 family.

The sequence is that of UPF0248 protein YG5714_2801 from Saccharolobus islandicus (strain Y.G.57.14 / Yellowstone #1) (Sulfolobus islandicus).